Here is a 2351-residue protein sequence, read N- to C-terminus: Protein FAM186A (2351 aa).

Positions E296–L340 form a coiled coil. Disordered regions lie at residues E412–R460, E470–K489, E505–G538, Q593–S667, S809–S838, L868–E976, G1805–P1837, and F1888–G1907. The span at D433 to F446 shows a compositional bias: basic and acidic residues. A compositionally biased stretch (polar residues) spans S472–K484. A compositionally biased stretch (basic and acidic residues) spans M506–A520. Residues L527–G538 show a composition bias toward polar residues. The span at G603–I612 shows a compositional bias: basic residues. Composition is skewed to basic and acidic residues over residues S619–K632 and Q812–Q823. The stretch at Q812 to N860 forms a coiled coil. A compositionally biased stretch (polar residues) spans E824 to S838. Composition is skewed to basic and acidic residues over residues A901–Q912, L939–H955, and K964–E976. The span at P1816 to G1835 shows a compositional bias: pro residues. Residues A1894 to G1907 are compositionally biased toward polar residues.

This sequence belongs to the FAM186 family.

The protein is Protein FAM186A (FAM186A) of Homo sapiens (Human).